Here is a 349-residue protein sequence, read N- to C-terminus: Probable dual-specificity RNA methyltransferase RlmN (349 aa).

The active-site Proton acceptor is the Glu-94. In terms of domain architecture, Radical SAM core spans 100 to 334 (TETRTTACVS…VKVRRSRGKD (235 aa)). An intrachain disulfide couples Cys-107 to Cys-339. Residues Cys-114, Cys-118, and Cys-121 each contribute to the [4Fe-4S] cluster site. S-adenosyl-L-methionine is bound by residues 165-166 (GE), Ser-197, 220-222 (SLH), and Asn-296. Cys-339 functions as the S-methylcysteine intermediate in the catalytic mechanism.

Belongs to the radical SAM superfamily. RlmN family. Requires [4Fe-4S] cluster as cofactor.

It is found in the cytoplasm. It carries out the reaction adenosine(2503) in 23S rRNA + 2 reduced [2Fe-2S]-[ferredoxin] + 2 S-adenosyl-L-methionine = 2-methyladenosine(2503) in 23S rRNA + 5'-deoxyadenosine + L-methionine + 2 oxidized [2Fe-2S]-[ferredoxin] + S-adenosyl-L-homocysteine. It catalyses the reaction adenosine(37) in tRNA + 2 reduced [2Fe-2S]-[ferredoxin] + 2 S-adenosyl-L-methionine = 2-methyladenosine(37) in tRNA + 5'-deoxyadenosine + L-methionine + 2 oxidized [2Fe-2S]-[ferredoxin] + S-adenosyl-L-homocysteine. Specifically methylates position 2 of adenine 2503 in 23S rRNA and position 2 of adenine 37 in tRNAs. The sequence is that of Probable dual-specificity RNA methyltransferase RlmN from Flavobacterium johnsoniae (strain ATCC 17061 / DSM 2064 / JCM 8514 / BCRC 14874 / CCUG 350202 / NBRC 14942 / NCIMB 11054 / UW101) (Cytophaga johnsonae).